The primary structure comprises 236 residues: 3-oxoacyl-[acyl-carrier-protein] reductase (236 aa).

An N-acetylmethionine modification is found at Met1. Residues Ser11 to Ile14 and Arg34 to Asn35 contribute to the NADP(+) site. Position 40 is an N6-acetyllysine (Lys40). An NADP(+)-binding site is contributed by Ala83–Gly85. Residue Lys96 is modified to N6-acetyllysine. Residue Ser134 participates in substrate binding. Residues Tyr147, Lys151, and Ile180–Thr182 contribute to the NADP(+) site. Tyr147 acts as the Proton acceptor in catalysis. Residue Lys194 is modified to N6-acetyllysine.

The protein belongs to the short-chain dehydrogenases/reductases (SDR) family. As to quaternary structure, homotetramer (in vitro). Heterotetramer with HSD17B8; contains two molecules each of HSD17B8 and CBR4. Does not form homotetramers when HSD17B8 is coexpressed, only heterotetramers (in vitro).

Its subcellular location is the mitochondrion matrix. The catalysed reaction is a (3R)-hydroxyacyl-[ACP] + NADP(+) = a 3-oxoacyl-[ACP] + NADPH + H(+). The enzyme catalyses a quinone + NADPH + H(+) = a quinol + NADP(+). The protein operates within lipid metabolism; fatty acid biosynthesis. Its function is as follows. Component of the heterotetramer complex KAR (3-ketoacyl-[acyl carrier protein] reductase or 3-ketoacyl-[ACP] reductase) that forms part of the mitochondrial fatty acid synthase (mtFAS). Beta-subunit of the KAR heterotetramer complex, responsible for the 3-ketoacyl-ACP reductase activity of the mtFAS, reduces 3-oxoacyl-[ACP] to (3R)-hydroxyacyl-[ACP] in a NADPH-dependent manner with no chain length preference, thereby participating in mitochondrial fatty acid biosynthesis. The homotetramer has NADPH-dependent quinone reductase activity (in vitro), hence could play a role in protection against cytotoxicity of exogenous quinones. As a heterotetramer, it can also reduce 9,10-phenanthrenequinone, 1,4-benzoquinone and various other o-quinones and p-quinones (in vitro). This Rattus norvegicus (Rat) protein is 3-oxoacyl-[acyl-carrier-protein] reductase (Cbr4).